The following is a 431-amino-acid chain: Glucose-1-phosphate adenylyltransferase (431 aa).

Residues Tyr108, Gly174, 189 to 190, and Ser207 contribute to the alpha-D-glucose 1-phosphate site; that span reads EK.

This sequence belongs to the bacterial/plant glucose-1-phosphate adenylyltransferase family. Homotetramer.

It carries out the reaction alpha-D-glucose 1-phosphate + ATP + H(+) = ADP-alpha-D-glucose + diphosphate. Its pathway is glycan biosynthesis; glycogen biosynthesis. Its function is as follows. Involved in the biosynthesis of ADP-glucose, a building block required for the elongation reactions to produce glycogen. Catalyzes the reaction between ATP and alpha-D-glucose 1-phosphate (G1P) to produce pyrophosphate and ADP-Glc. The chain is Glucose-1-phosphate adenylyltransferase from Actinobacillus succinogenes (strain ATCC 55618 / DSM 22257 / CCUG 43843 / 130Z).